An 85-amino-acid chain; its full sequence is Small ribosomal subunit protein bS16c (85 aa).

The protein belongs to the bacterial ribosomal protein bS16 family.

It localises to the plastid. It is found in the chloroplast. This is Small ribosomal subunit protein bS16c from Saccharum hybrid (Sugarcane).